Here is a 117-residue protein sequence, read N- to C-terminus: Holo-[acyl-carrier-protein] synthase (117 aa).

Mg(2+)-binding residues include D8 and E59.

It belongs to the P-Pant transferase superfamily. AcpS family. Mg(2+) is required as a cofactor.

The protein localises to the cytoplasm. The enzyme catalyses apo-[ACP] + CoA = holo-[ACP] + adenosine 3',5'-bisphosphate + H(+). Transfers the 4'-phosphopantetheine moiety from coenzyme A to a Ser of acyl-carrier-protein. This chain is Holo-[acyl-carrier-protein] synthase, found in Staphylococcus carnosus (strain TM300).